The primary structure comprises 391 residues: Processive diacylglycerol beta-glucosyltransferase (391 aa).

This sequence belongs to the glycosyltransferase 28 family. UgtP subfamily.

Its subcellular location is the cell membrane. The enzyme catalyses a 1,2-diacyl-3-O-(beta-D-glucopyranosyl)-sn-glycerol + UDP-alpha-D-glucose = a 1,2-diacyl-3-O-(beta-D-Glc-(1-&gt;6)-beta-D-Glc)-sn-glycerol + UDP + H(+). The catalysed reaction is a 1,2-diacyl-sn-glycerol + UDP-alpha-D-glucose = a 1,2-diacyl-3-O-(beta-D-glucopyranosyl)-sn-glycerol + UDP + H(+). It participates in glycolipid metabolism; diglucosyl-diacylglycerol biosynthesis. In terms of biological role, processive glucosyltransferase involved in the biosynthesis of both the bilayer- and non-bilayer-forming membrane glucolipids. Is able to successively transfer two glucosyl residues to diacylglycerol (DAG), thereby catalyzing the formation of beta-monoglucosyl-DAG (3-O-(beta-D-glucopyranosyl)-1,2-diacyl-sn-glycerol) and beta-diglucosyl-DAG (3-O-(beta-D-glucopyranosyl-beta-(1-&gt;6)-D-glucopyranosyl)-1,2-diacyl-sn-glycerol). Beta-diglucosyl-DAG is the predominant glycolipid found in Bacillales and is also used as a membrane anchor for lipoteichoic acid (LTA). This Staphylococcus carnosus (strain TM300) protein is Processive diacylglycerol beta-glucosyltransferase.